Here is a 290-residue protein sequence, read N- to C-terminus: Proteasome subunit beta (290 aa).

A propeptide spans 1-58 (MTTSGGLTGPGAFGRLPQPFHQPGITSFVEFLALQAPDLLPGRLQMPAGGQPPEVPHG) (removed in mature form; by autocatalysis). Thr-59 (nucleophile) is an active-site residue.

The protein belongs to the peptidase T1B family. As to quaternary structure, the 20S proteasome core is composed of 14 alpha and 14 beta subunits that assemble into four stacked heptameric rings, resulting in a barrel-shaped structure. The two inner rings, each composed of seven catalytic beta subunits, are sandwiched by two outer rings, each composed of seven alpha subunits. The catalytic chamber with the active sites is on the inside of the barrel. Has a gated structure, the ends of the cylinder being occluded by the N-termini of the alpha-subunits. Is capped by the proteasome-associated ATPase, ARC.

It is found in the cytoplasm. It catalyses the reaction Cleavage of peptide bonds with very broad specificity.. Its pathway is protein degradation; proteasomal Pup-dependent pathway. With respect to regulation, the formation of the proteasomal ATPase ARC-20S proteasome complex, likely via the docking of the C-termini of ARC into the intersubunit pockets in the alpha-rings, may trigger opening of the gate for substrate entry. Interconversion between the open-gate and close-gate conformations leads to a dynamic regulation of the 20S proteasome proteolysis activity. Functionally, component of the proteasome core, a large protease complex with broad specificity involved in protein degradation. The chain is Proteasome subunit beta from Acidothermus cellulolyticus (strain ATCC 43068 / DSM 8971 / 11B).